The chain runs to 237 residues: Ribosomal RNA small subunit methyltransferase G (237 aa).

S-adenosyl-L-methionine-binding positions include Gly-76, Phe-81, 128-129 (IE), and Arg-147.

Belongs to the methyltransferase superfamily. RNA methyltransferase RsmG family.

The protein resides in the cytoplasm. In terms of biological role, specifically methylates the N7 position of a guanine in 16S rRNA. This is Ribosomal RNA small subunit methyltransferase G from Prochlorococcus marinus (strain MIT 9301).